Consider the following 365-residue polypeptide: 3-dehydroquinate synthase (365 aa).

NAD(+)-binding positions include 69–74, 103–107, 127–128, K140, K149, and 167–170; these read DGEAHK, GVIGD, TT, and TLNT. 3 residues coordinate Zn(2+): E182, H245, and H262.

The protein belongs to the sugar phosphate cyclases superfamily. Dehydroquinate synthase family. It depends on Co(2+) as a cofactor. The cofactor is Zn(2+). NAD(+) serves as cofactor.

It localises to the cytoplasm. The catalysed reaction is 7-phospho-2-dehydro-3-deoxy-D-arabino-heptonate = 3-dehydroquinate + phosphate. It participates in metabolic intermediate biosynthesis; chorismate biosynthesis; chorismate from D-erythrose 4-phosphate and phosphoenolpyruvate: step 2/7. Catalyzes the conversion of 3-deoxy-D-arabino-heptulosonate 7-phosphate (DAHP) to dehydroquinate (DHQ). In Pseudomonas putida (strain W619), this protein is 3-dehydroquinate synthase.